The primary structure comprises 199 residues: Protein GrpE (199 aa).

Basic and acidic residues predominate over residues 1 to 24; the sequence is MSKQNKKDWKKFRDEHKEEHKVEN. A disordered region spans residues 1–52; it reads MSKQNKKDWKKFRDEHKEEHKVENEILEEETDEESQHQEPALGHPSYTALEE.

The protein belongs to the GrpE family. Homodimer.

It is found in the cytoplasm. Its function is as follows. Participates actively in the response to hyperosmotic and heat shock by preventing the aggregation of stress-denatured proteins, in association with DnaK and GrpE. It is the nucleotide exchange factor for DnaK and may function as a thermosensor. Unfolded proteins bind initially to DnaJ; upon interaction with the DnaJ-bound protein, DnaK hydrolyzes its bound ATP, resulting in the formation of a stable complex. GrpE releases ADP from DnaK; ATP binding to DnaK triggers the release of the substrate protein, thus completing the reaction cycle. Several rounds of ATP-dependent interactions between DnaJ, DnaK and GrpE are required for fully efficient folding. The sequence is that of Protein GrpE from Legionella pneumophila (strain Lens).